A 263-amino-acid chain; its full sequence is Cobalt-precorrin-6A reductase (263 aa).

Belongs to the precorrin-6x reductase family.

It carries out the reaction Co-precorrin-6B + NAD(+) = Co-precorrin-6A + NADH + H(+). It functions in the pathway cofactor biosynthesis; adenosylcobalamin biosynthesis; cob(II)yrinate a,c-diamide from sirohydrochlorin (anaerobic route): step 7/10. In terms of biological role, catalyzes the reduction of the macrocycle of cobalt-precorrin-6A to cobalt-precorrin-6B. The sequence is that of Cobalt-precorrin-6A reductase (cbiJ) from Salmonella typhimurium (strain LT2 / SGSC1412 / ATCC 700720).